The following is a 466-amino-acid chain: Ribulose bisphosphate carboxylase large chain (466 aa).

Position 5 is an N6,N6,N6-trimethyllysine (K5). Substrate is bound by residues N114 and T164. Residue K166 is the Proton acceptor of the active site. Substrate is bound at residue K168. K192, D194, and E195 together coordinate Mg(2+). An N6-carboxylysine modification is found at K192. H285 functions as the Proton acceptor in the catalytic mechanism. Substrate is bound by residues R286, H318, and S370.

It belongs to the RuBisCO large chain family. Type I subfamily. Heterohexadecamer of 8 large chains and 8 small chains; disulfide-linked. The disulfide link is formed within the large subunit homodimers. The cofactor is Mg(2+). Post-translationally, the disulfide bond which can form in the large chain dimeric partners within the hexadecamer appears to be associated with oxidative stress and protein turnover.

It localises to the plastid. Its subcellular location is the chloroplast. The enzyme catalyses 2 (2R)-3-phosphoglycerate + 2 H(+) = D-ribulose 1,5-bisphosphate + CO2 + H2O. The catalysed reaction is D-ribulose 1,5-bisphosphate + O2 = 2-phosphoglycolate + (2R)-3-phosphoglycerate + 2 H(+). In terms of biological role, ruBisCO catalyzes two reactions: the carboxylation of D-ribulose 1,5-bisphosphate, the primary event in carbon dioxide fixation, as well as the oxidative fragmentation of the pentose substrate in the photorespiration process. Both reactions occur simultaneously and in competition at the same active site. This chain is Ribulose bisphosphate carboxylase large chain, found in Isophysis tasmanica.